Reading from the N-terminus, the 259-residue chain is NAD kinase (259 aa).

Residue D49 is the Proton acceptor of the active site. Residues D49 to G50, R54, N118 to E119, D148, A156, T159 to S164, and A183 contribute to the NAD(+) site.

Belongs to the NAD kinase family. Requires a divalent metal cation as cofactor.

It localises to the cytoplasm. The enzyme catalyses NAD(+) + ATP = ADP + NADP(+) + H(+). In terms of biological role, involved in the regulation of the intracellular balance of NAD and NADP, and is a key enzyme in the biosynthesis of NADP. Catalyzes specifically the phosphorylation on 2'-hydroxyl of the adenosine moiety of NAD to yield NADP. The sequence is that of NAD kinase from Xylella fastidiosa (strain Temecula1 / ATCC 700964).